The chain runs to 281 residues: 2-dehydro-3-deoxyphosphooctonate aldolase (281 aa).

Belongs to the KdsA family.

It localises to the cytoplasm. The enzyme catalyses D-arabinose 5-phosphate + phosphoenolpyruvate + H2O = 3-deoxy-alpha-D-manno-2-octulosonate-8-phosphate + phosphate. It functions in the pathway carbohydrate biosynthesis; 3-deoxy-D-manno-octulosonate biosynthesis; 3-deoxy-D-manno-octulosonate from D-ribulose 5-phosphate: step 2/3. Its pathway is bacterial outer membrane biogenesis; lipopolysaccharide biosynthesis. The chain is 2-dehydro-3-deoxyphosphooctonate aldolase from Azotobacter vinelandii (strain DJ / ATCC BAA-1303).